Consider the following 164-residue polypeptide: Putative pre-16S rRNA nuclease (164 aa).

Belongs to the YqgF nuclease family.

It is found in the cytoplasm. In terms of biological role, could be a nuclease involved in processing of the 5'-end of pre-16S rRNA. This Caulobacter sp. (strain K31) protein is Putative pre-16S rRNA nuclease.